We begin with the raw amino-acid sequence, 205 residues long: Small ribosomal subunit protein uS4 (205 aa).

Positions 1–16 are enriched in basic and acidic residues; the sequence is MSKRESAKHKIDRRLG. The segment at 1-46 is disordered; that stretch reads MSKRESAKHKIDRRLGENIWGRPKSPVNRREYGPGQHGQRRKGKLS. The 64-residue stretch at 94–157 folds into the S4 RNA-binding domain; that stretch reads SRLDAVVYRA…KQLAIVLEAV (64 aa).

Belongs to the universal ribosomal protein uS4 family. As to quaternary structure, part of the 30S ribosomal subunit. Contacts protein S5. The interaction surface between S4 and S5 is involved in control of translational fidelity.

Functionally, one of the primary rRNA binding proteins, it binds directly to 16S rRNA where it nucleates assembly of the body of the 30S subunit. In terms of biological role, with S5 and S12 plays an important role in translational accuracy. The polypeptide is Small ribosomal subunit protein uS4 (Brucella abortus (strain S19)).